The primary structure comprises 314 residues: DNA-directed RNA polymerase subunit alpha (314 aa).

The segment at 1–228 (MIEIEKPKIE…EHLNIFVGLT (228 aa)) is alpha N-terminal domain (alpha-NTD). Positions 246 to 314 (EKVLEMTIEE…ELGLGLRKDD (69 aa)) are alpha C-terminal domain (alpha-CTD).

This sequence belongs to the RNA polymerase alpha chain family. As to quaternary structure, homodimer. The RNAP catalytic core consists of 2 alpha, 1 beta, 1 beta' and 1 omega subunit. When a sigma factor is associated with the core the holoenzyme is formed, which can initiate transcription.

The enzyme catalyses RNA(n) + a ribonucleoside 5'-triphosphate = RNA(n+1) + diphosphate. Its function is as follows. DNA-dependent RNA polymerase catalyzes the transcription of DNA into RNA using the four ribonucleoside triphosphates as substrates. This chain is DNA-directed RNA polymerase subunit alpha, found in Bacillus cytotoxicus (strain DSM 22905 / CIP 110041 / 391-98 / NVH 391-98).